The following is a 371-amino-acid chain: Aminomethyltransferase (371 aa).

It belongs to the GcvT family. The glycine cleavage system is composed of four proteins: P, T, L and H.

The enzyme catalyses N(6)-[(R)-S(8)-aminomethyldihydrolipoyl]-L-lysyl-[protein] + (6S)-5,6,7,8-tetrahydrofolate = N(6)-[(R)-dihydrolipoyl]-L-lysyl-[protein] + (6R)-5,10-methylene-5,6,7,8-tetrahydrofolate + NH4(+). Functionally, the glycine cleavage system catalyzes the degradation of glycine. This chain is Aminomethyltransferase, found in Pectobacterium carotovorum subsp. carotovorum (strain PC1).